The following is a 217-amino-acid chain: Ras-related protein RABA1g (217 aa).

A GTP-binding site is contributed by 20–27 (GDSGVGKS). Residues 42–50 (SKSTIGVEF) carry the Effector region motif. Residues 68–72 (DTAGQ), 126–129 (NKAD), and 156–157 (SA) each bind GTP. S-geranylgeranyl cysteine attachment occurs at residues C214 and C215.

The protein belongs to the small GTPase superfamily. Rab family.

The protein resides in the cell membrane. In terms of biological role, intracellular vesicle trafficking and protein transport. This is Ras-related protein RABA1g (RABA1G) from Arabidopsis thaliana (Mouse-ear cress).